We begin with the raw amino-acid sequence, 449 residues long: UDP-N-acetylmuramoylalanine--D-glutamate ligase (449 aa).

111 to 117 serves as a coordination point for ATP; that stretch reads GTNGKST.

It belongs to the MurCDEF family.

It localises to the cytoplasm. It catalyses the reaction UDP-N-acetyl-alpha-D-muramoyl-L-alanine + D-glutamate + ATP = UDP-N-acetyl-alpha-D-muramoyl-L-alanyl-D-glutamate + ADP + phosphate + H(+). It functions in the pathway cell wall biogenesis; peptidoglycan biosynthesis. In terms of biological role, cell wall formation. Catalyzes the addition of glutamate to the nucleotide precursor UDP-N-acetylmuramoyl-L-alanine (UMA). This is UDP-N-acetylmuramoylalanine--D-glutamate ligase from Rickettsia felis (strain ATCC VR-1525 / URRWXCal2) (Rickettsia azadi).